We begin with the raw amino-acid sequence, 548 residues long: C-type lectin domain family 4 member F (548 aa).

The Cytoplasmic portion of the chain corresponds to 1–42 (MKEAELNRDMARYCTDNQCVSLQPQGLGPKSAALMAPRTLRH). Residues 43 to 69 (VQVILALMVVTVIFSLLALFVVASQPW) traverse the membrane as a helical; Signal-anchor for type II membrane protein segment. The Extracellular portion of the chain corresponds to 70 to 548 (RPEWNKEPPS…STGWSAARVG (479 aa)). Residues N86, N92, N115, N132, N209, and N255 are each glycosylated (N-linked (GlcNAc...) asparagine). The 101-residue stretch at 438-538 (KFCTSQGAHL…GSSYPWVCKK (101 aa)) folds into the C-type lectin domain. Intrachain disulfides connect C440-C536 and C516-C528.

In terms of tissue distribution, kupffer cells.

It localises to the membrane. Functionally, receptor with an affinity for galactose and fucose. Could be involved in endocytosis. The chain is C-type lectin domain family 4 member F (Clec4f) from Mus musculus (Mouse).